Here is a 557-residue protein sequence, read N- to C-terminus: MAQEPADLASDYQFWLQKLSAWEQASSKETQRDTCLHLSRFQEFLRQMYELLKEMDSDAILERFPSIGQLLAKTCWNPLILAYDESQKIVIWCLCCLMNKAPRTSAESGRNSWIQGLLSHVLSAFRFDMKEVCLFTKSLGYESIDYYPSLLKNMVLSLVSELRGSHLNGLNTQSRMAPERMMSLSQVCVPLVTLPDIEPLVEALLTYHGHEPQEVLSAEFFEAVTEAFLSEKVVLPTSSVVSLWFRHLPSLEKATLHLFEKLFSSKRNCLRRMECCIKESLLPQAACQPAIFRIVDEMFRFVLLETDGAPAVLAALQIFTSCLVEALRKENKQLKFALKTYFPYSAPCLTAALSQQPEAIPQGHRLQPLLHISQLLREAVEDCTDGSHRNPFESWFLFVHFGGWVDLAVEELLLREEAEPPAGLLWLLVFYYSPQDRSQQREQSMVELKVLVNRLLKLLRSGPLSAMDLLEAAESPREDPRPVCGQLVRRLLLSLLFWTPEGHAIVWEAVTHMAHTDAVTHEIVGFLDQTLYRSHHLCVEASRKLARELLKDLQAQV.

Belongs to the multisubunit FA complex composed of FANCA, FANCB, FANCC, FANCE, FANCF, FANCG, FANCL/PHF9 and FANCM. This complex may also include HSP70. Interacts with ZBTB32. Upon IFNG induction, interacts with STAT1. Interacts with CDK1. Interacts with EIF2AK2.

Its subcellular location is the nucleus. The protein resides in the cytoplasm. Its function is as follows. DNA repair protein that may operate in a postreplication repair or a cell cycle checkpoint function. May be implicated in interstrand DNA cross-link repair and in the maintenance of normal chromosome stability. Upon IFNG induction, may facilitate STAT1 activation by recruiting STAT1 to IFNGR1. The polypeptide is Fanconi anemia group C protein homolog (Fancc) (Rattus norvegicus (Rat)).